The primary structure comprises 190 residues: Segregation and condensation protein B (190 aa).

It belongs to the ScpB family. As to quaternary structure, homodimer. Homodimerization may be required to stabilize the binding of ScpA to the Smc head domains. Component of a cohesin-like complex composed of ScpA, ScpB and the Smc homodimer, in which ScpA and ScpB bind to the head domain of Smc. The presence of the three proteins is required for the association of the complex with DNA.

The protein resides in the cytoplasm. Functionally, participates in chromosomal partition during cell division. May act via the formation of a condensin-like complex containing Smc and ScpA that pull DNA away from mid-cell into both cell halves. In Bacillus cereus (strain B4264), this protein is Segregation and condensation protein B.